The sequence spans 146 residues: Large ribosomal subunit protein uL15 (146 aa).

Residues 1-18 are compositionally biased toward basic and acidic residues; sequence MKLHELKPSEGSRKERNR. Residues 1 to 50 form a disordered region; the sequence is MKLHELKPSEGSRKERNRVGRGTGSGNGKTSGRGHKGQKARSGGGVRLGF. The span at 21 to 31 shows a compositional bias: gly residues; sequence RGTGSGNGKTS.

The protein belongs to the universal ribosomal protein uL15 family. Part of the 50S ribosomal subunit.

In terms of biological role, binds to the 23S rRNA. The protein is Large ribosomal subunit protein uL15 of Listeria innocua serovar 6a (strain ATCC BAA-680 / CLIP 11262).